A 505-amino-acid polypeptide reads, in one-letter code: Glutamate--tRNA ligase (505 aa).

Positions 16 to 26 (PSPTGFPHVGT) match the 'HIGH' region motif. Positions 257 to 261 (KLSKR) match the 'KMSKS' region motif. Lys260 lines the ATP pocket.

Belongs to the class-I aminoacyl-tRNA synthetase family. Glutamate--tRNA ligase type 1 subfamily. As to quaternary structure, monomer.

It is found in the cytoplasm. The catalysed reaction is tRNA(Glu) + L-glutamate + ATP = L-glutamyl-tRNA(Glu) + AMP + diphosphate. Functionally, catalyzes the attachment of glutamate to tRNA(Glu) in a two-step reaction: glutamate is first activated by ATP to form Glu-AMP and then transferred to the acceptor end of tRNA(Glu). In Psychrobacter sp. (strain PRwf-1), this protein is Glutamate--tRNA ligase.